A 312-amino-acid chain; its full sequence is MDGGNQSEGSEFLLLGMSESPEQQRILFWMFLSMYLVTVVGNVLIILAISSDSCLHTPMYFFLANLSFTDLFFVTNTIPKMLVNLQSQNKAISYAGCLTQLYFLVSLVALDNLILAVMAYDRYVAICCPLHYTTAMSPKLCILLLSLCWVLSVLYGLIHTLLMTRVTFCGSRKIHYIFCEMYVLLRMACSNIQTNHTVLIATGCFIFLIPFGFVIISYVLIIRAILRIPSLSKKYKAFSTCASHLGAVSLFYGTLCMVYLKPLHTYSVKDSVATVMYAVVTPMMNPFIYSLRNKDMHGALGRLLDKHFKRLT.

The Extracellular portion of the chain corresponds to 1–25; that stretch reads MDGGNQSEGSEFLLLGMSESPEQQR. N-linked (GlcNAc...) asparagine glycosylation is present at asparagine 5. The chain crosses the membrane as a helical span at residues 26–49; it reads ILFWMFLSMYLVTVVGNVLIILAI. The Cytoplasmic segment spans residues 50 to 57; it reads SSDSCLHT. Residues 58-79 form a helical membrane-spanning segment; that stretch reads PMYFFLANLSFTDLFFVTNTIP. Residues 80–100 are Extracellular-facing; it reads KMLVNLQSQNKAISYAGCLTQ. Cysteines 97 and 189 form a disulfide. Residues 101–120 form a helical membrane-spanning segment; it reads LYFLVSLVALDNLILAVMAY. The Cytoplasmic segment spans residues 121 to 139; that stretch reads DRYVAICCPLHYTTAMSPK. The helical transmembrane segment at 140-158 threads the bilayer; the sequence is LCILLLSLCWVLSVLYGLI. Residues 159–196 lie on the Extracellular side of the membrane; it reads HTLLMTRVTFCGSRKIHYIFCEMYVLLRMACSNIQTNH. Asparagine 195 carries an N-linked (GlcNAc...) asparagine glycan. The helical transmembrane segment at 197–219 threads the bilayer; sequence TVLIATGCFIFLIPFGFVIISYV. At 220–236 the chain is on the cytoplasmic side; that stretch reads LIIRAILRIPSLSKKYK. A helical membrane pass occupies residues 237–259; it reads AFSTCASHLGAVSLFYGTLCMVY. Over 260-271 the chain is Extracellular; sequence LKPLHTYSVKDS. A helical transmembrane segment spans residues 272–291; the sequence is VATVMYAVVTPMMNPFIYSL. Over 292 to 312 the chain is Cytoplasmic; the sequence is RNKDMHGALGRLLDKHFKRLT.

It belongs to the G-protein coupled receptor 1 family.

It localises to the cell membrane. Its function is as follows. Odorant receptor. This is Olfactory receptor 1D2 (OR1D2) from Pan troglodytes (Chimpanzee).